We begin with the raw amino-acid sequence, 380 residues long: Cytochrome b (380 aa).

The next 4 helical transmembrane spans lie at 34–54 (FGSL…LLAT), 78–99 (WLIR…YLHI), 114–134 (WNTG…GYVL), and 179–199 (FFAL…IHLT). Histidine 84 and histidine 98 together coordinate heme b. Residues histidine 183 and histidine 197 each contribute to the heme b site. Histidine 202 is a binding site for a ubiquinone. 4 helical membrane-spanning segments follow: residues 227-247 (LKDI…ALFS), 289-309 (LGGV…PLLH), 321-341 (LSQL…WVGS), and 348-368 (FIII…LLFP).

This sequence belongs to the cytochrome b family. In terms of assembly, the cytochrome bc1 complex contains 11 subunits: 3 respiratory subunits (MT-CYB, CYC1 and UQCRFS1), 2 core proteins (UQCRC1 and UQCRC2) and 6 low-molecular weight proteins (UQCRH/QCR6, UQCRB/QCR7, UQCRQ/QCR8, UQCR10/QCR9, UQCR11/QCR10 and a cleavage product of UQCRFS1). This cytochrome bc1 complex then forms a dimer. Requires heme b as cofactor.

The protein resides in the mitochondrion inner membrane. Its function is as follows. Component of the ubiquinol-cytochrome c reductase complex (complex III or cytochrome b-c1 complex) that is part of the mitochondrial respiratory chain. The b-c1 complex mediates electron transfer from ubiquinol to cytochrome c. Contributes to the generation of a proton gradient across the mitochondrial membrane that is then used for ATP synthesis. The polypeptide is Cytochrome b (MT-CYB) (Uria lomvia (Thick-billed murre)).